The chain runs to 661 residues: DNA ligase (661 aa).

Residues Asp-31–Asp-35, Ser-79–Leu-80, and Glu-112 each bind NAD(+). Residue Lys-114 is the N6-AMP-lysine intermediate of the active site. The NAD(+) site is built by Arg-135, Glu-169, Lys-281, and Lys-305. Zn(2+)-binding residues include Cys-398, Cys-401, Cys-414, and Cys-420. The 84-residue stretch at Gln-578–Leu-661 folds into the BRCT domain.

This sequence belongs to the NAD-dependent DNA ligase family. LigA subfamily. Mg(2+) is required as a cofactor. The cofactor is Mn(2+).

The catalysed reaction is NAD(+) + (deoxyribonucleotide)n-3'-hydroxyl + 5'-phospho-(deoxyribonucleotide)m = (deoxyribonucleotide)n+m + AMP + beta-nicotinamide D-nucleotide.. Functionally, DNA ligase that catalyzes the formation of phosphodiester linkages between 5'-phosphoryl and 3'-hydroxyl groups in double-stranded DNA using NAD as a coenzyme and as the energy source for the reaction. It is essential for DNA replication and repair of damaged DNA. The sequence is that of DNA ligase from Alkaliphilus oremlandii (strain OhILAs) (Clostridium oremlandii (strain OhILAs)).